The primary structure comprises 325 residues: Ribosomal RNA small subunit methyltransferase H (325 aa).

S-adenosyl-L-methionine-binding positions include 39-41 (GGH), D59, F90, D108, and Q115.

The protein belongs to the methyltransferase superfamily. RsmH family.

The protein localises to the cytoplasm. The enzyme catalyses cytidine(1402) in 16S rRNA + S-adenosyl-L-methionine = N(4)-methylcytidine(1402) in 16S rRNA + S-adenosyl-L-homocysteine + H(+). Its function is as follows. Specifically methylates the N4 position of cytidine in position 1402 (C1402) of 16S rRNA. This chain is Ribosomal RNA small subunit methyltransferase H, found in Leptothrix cholodnii (strain ATCC 51168 / LMG 8142 / SP-6) (Leptothrix discophora (strain SP-6)).